Consider the following 736-residue polypeptide: MKKSRSVMTVMADDNVKDYFECSLSKSYSSSSNTLGIDLWRGRRCCSGNLQLPPLSQRQSERARTPEGDGISRPTTLPLTTLPSIAITTVSQECFDVENGPSPGRSPLDPQASSSAGLVLHATFPGHSQRRESFLYRSDSDYDLSPKAMSRNSSLPSEQHGDDLIVTPFAQVLASLRSVRNNFTILTNLHGTSNKRSPAASQPPVSRVNPQEESYQKLAMETLEELDWCLDQLETIQTYRSVSEMASNKFKRMLNRELTHLSEMSRSGNQVSEYISNTFLDKQNDVEIPSPTQKDREKKKKQQLMTQISGVKKLMHSSSLNNTSISRFGVNTENEDHLAKELEDLNKWGLNIFNVAGYSHNRPLTCIMYAIFQERDLLKTFRISSDTFITYMMTLEDHYHSDVAYHNSLHAADVAQSTHVLLSTPALDAVFTDLEILAAIFAAAIHDVDHPGVSNQFLINTNSELALMYNDESVLENHHLAVGFKLLQEEHCDIFMNLTKKQRQTLRKMVIDMVLATDMSKHMSLLADLKTMVETKKVTSSGVLLLDNYTDRIQVLRNMVHCADLSNPTKSLELYRQWTDRIMEEFFQQGDKERERGMEISPMCDKHTASVEKSQVGFIDYIVHPLWETWADLVQPDAQDILDTLEDNRNWYQSMIPQSPSPPLDEQNRDCQGLMEKFQFELTLDEEDSEGPEKEGEGHSYFSSTKTLCVIDPENRDSLGETDIDIATEDKSPVDT.

Disordered regions lie at residues 51–78 (QLPP…TTLP), 189–209 (LHGT…SRVN), and 282–301 (KQND…KKKK). Position 290 is a phosphoserine (Ser-290). The region spanning 330-659 (VNTENEDHLA…NWYQSMIPQS (330 aa)) is the PDEase domain. The active-site Proton donor is the His-406. His-406 lines the 3',5'-cyclic AMP pocket. The AMP site is built by His-406 and His-410. Positions 410, 446, 447, and 564 each coordinate Zn(2+). 4 residues coordinate AMP: Asp-447, Asp-564, Gln-615, and Phe-618. Residue Asp-447 coordinates Mg(2+). Asp-447 contacts Mn(2+). Residues Gln-615 and Phe-618 each coordinate 3',5'-cyclic AMP. Phosphoserine occurs at positions 659 and 661. The segment at 685–736 (DEEDSEGPEKEGEGHSYFSSTKTLCVIDPENRDSLGETDIDIATEDKSPVDT) is disordered.

The protein belongs to the cyclic nucleotide phosphodiesterase family. PDE4 subfamily. Interacts with DISC1. Requires Zn(2+) as cofactor. Mg(2+) serves as cofactor. It depends on Mn(2+) as a cofactor. Expressed in brain, heart, lung and skeletal muscle. Expressed in white blood cells. In terms of tissue distribution, brain-specific isoform.

It is found in the cytoplasm. The protein resides in the cell membrane. It carries out the reaction 3',5'-cyclic AMP + H2O = AMP + H(+). It functions in the pathway purine metabolism; 3',5'-cyclic AMP degradation; AMP from 3',5'-cyclic AMP: step 1/1. Its activity is regulated as follows. Inhibited by rolipram. Its function is as follows. Hydrolyzes the second messenger cAMP, which is a key regulator of many important physiological processes. May be involved in mediating central nervous system effects of therapeutic agents ranging from antidepressants to antiasthmatic and anti-inflammatory agents. This is 3',5'-cyclic-AMP phosphodiesterase 4B from Homo sapiens (Human).